Reading from the N-terminus, the 243-residue chain is tRNA pseudouridine synthase A (243 aa).

Asp51 functions as the Nucleophile in the catalytic mechanism. Tyr111 contributes to the substrate binding site.

It belongs to the tRNA pseudouridine synthase TruA family. As to quaternary structure, homodimer.

It carries out the reaction uridine(38/39/40) in tRNA = pseudouridine(38/39/40) in tRNA. In terms of biological role, formation of pseudouridine at positions 38, 39 and 40 in the anticodon stem and loop of transfer RNAs. This Neorickettsia sennetsu (strain ATCC VR-367 / Miyayama) (Ehrlichia sennetsu) protein is tRNA pseudouridine synthase A.